Here is a 159-residue protein sequence, read N- to C-terminus: Histone H1 (159 aa).

Disordered stretches follow at residues 1-31 (MAEK…ITEL), 80-99 (KGAE…KKEK), and 132-159 (AAKK…KKKS). Residues 10 to 22 (VTTKKPAATHRRR) are compositionally biased toward basic residues. The H15 domain maps to 12–102 (TKKPAATHRR…GEGKKEKEKA (91 aa)). The span at 84 to 93 (CAGGQGTGVG) shows a compositional bias: gly residues. The segment covering 134–148 (KKVKAAPKKAKKPVK) has biased composition (basic residues). Positions 149–159 (KTTEKKEKKKS) are enriched in basic and acidic residues.

It belongs to the histone H1/H5 family.

It localises to the nucleus. The protein localises to the chromosome. Histones H1 are necessary for the condensation of nucleosome chains into higher-order structures. This Psammechinus miliaris (Green sea urchin) protein is Histone H1.